We begin with the raw amino-acid sequence, 217 residues long: Coiled-coil domain-containing protein 124 (217 aa).

The interval 1-120 (MPKKFQGENS…PVEKAKSHLE (120 aa)) is disordered. Residues 15–82 (ARARRAEAKA…LLEEEDSRLK (68 aa)) adopt a coiled-coil conformation. Basic and acidic residues-rich tracts occupy residues 18–74 (RRAE…QRLL) and 98–120 (QIEDSLRREQRAEPVEKAKSHLE). Residues serine 136 and serine 188 each carry the phosphoserine modification.

It belongs to the CCDC124 family. As to quaternary structure, associates with translationally inactive ribosomes in the nonrotated state. Interacts with RASGEF1B.

It localises to the cytoplasm. The protein localises to the cytoskeleton. It is found in the microtubule organizing center. The protein resides in the centrosome. Its subcellular location is the midbody. Its function is as follows. Ribosome-binding protein involved in ribosome hibernation: associates with translationally inactive ribosomes and stabilizes the nonrotated conformation of the 80S ribosome, thereby promoting ribosome preservation and storage. Also required for proper progression of late cytokinetic stages. This is Coiled-coil domain-containing protein 124 (Ccdc124) from Mus musculus (Mouse).